The following is a 143-amino-acid chain: Small ribosomal subunit protein bS6 (143 aa).

Residues 96–143 (VTEASPMAAAKEERRDDRREVKKDVAAAPVEAKEDSVEEKSEEAASEE) are disordered. The span at 105–143 (AKEERRDDRREVKKDVAAAPVEAKEDSVEEKSEEAASEE) shows a compositional bias: basic and acidic residues.

This sequence belongs to the bacterial ribosomal protein bS6 family.

Functionally, binds together with bS18 to 16S ribosomal RNA. This Colwellia psychrerythraea (strain 34H / ATCC BAA-681) (Vibrio psychroerythus) protein is Small ribosomal subunit protein bS6.